The sequence spans 116 residues: Protein Rev (116 aa).

Phosphoserine; by host CK2 occurs at positions 5 and 8. The segment at 18–26 (IIKILYQSN) is homomultimerization. A Nuclear localization signal and RNA-binding (RRE) motif is present at residues 34–50 (TRQARRNRRRRWRARQR). The short motif at 73 to 84 (LQLPPLERLTLN) is the Nuclear export signal and binding to XPO1 element. The disordered stretch occupies residues 87-116 (EDCGTSGEKGEGSPQISLESSTILGTGTKE). Phosphoserine; by host occurs at positions 92 and 99. The span at 100 to 116 (PQISLESSTILGTGTKE) shows a compositional bias: polar residues.

The protein belongs to the HIV-1 REV protein family. In terms of assembly, homomultimer; when bound to the RRE. Multimeric assembly is essential for activity and may involve XPO1. Binds to human KPNB1, XPO1, TNPO1, RANBP5 and IPO7. Interacts with the viral Integrase. Interacts with human KHDRBS1. Interacts with human NAP1; this interaction decreases Rev multimerization and stimulates its activity. Interacts with human DEAD-box helicases DDX3 and DDX24; these interactions may serve for viral RNA export to the cytoplasm and packaging, respectively. Interacts with human PSIP1; this interaction may inhibit HIV-1 DNA integration by promoting dissociation of the Integrase-LEDGF/p75 complex. Post-translationally, asymmetrically arginine dimethylated at one site by host PRMT6. Methylation impairs the RNA-binding activity and export of viral RNA from the nucleus to the cytoplasm. Phosphorylated by protein kinase CK2. Presence of, and maybe binding to the N-terminus of the regulatory beta subunit of CK2 is necessary for CK2-mediated Rev's phosphorylation.

It is found in the host nucleus. It localises to the host nucleolus. The protein resides in the host cytoplasm. Its function is as follows. Escorts unspliced or incompletely spliced viral pre-mRNAs (late transcripts) out of the nucleus of infected cells. These pre-mRNAs carry a recognition sequence called Rev responsive element (RRE) located in the env gene, that is not present in fully spliced viral mRNAs (early transcripts). This function is essential since most viral proteins are translated from unspliced or partially spliced pre-mRNAs which cannot exit the nucleus by the pathway used by fully processed cellular mRNAs. Rev itself is translated from a fully spliced mRNA that readily exits the nucleus. Rev's nuclear localization signal (NLS) binds directly to KPNB1/Importin beta-1 without previous binding to KPNA1/Importin alpha-1. KPNB1 binds to the GDP bound form of RAN (Ran-GDP) and targets Rev to the nucleus. In the nucleus, the conversion from Ran-GDP to Ran-GTP dissociates Rev from KPNB1 and allows Rev's binding to the RRE in viral pre-mRNAs. Rev multimerization on the RRE via cooperative assembly exposes its nuclear export signal (NES) to the surface. Rev can then form a complex with XPO1/CRM1 and Ran-GTP, leading to nuclear export of the complex. Conversion from Ran-GTP to Ran-GDP mediates dissociation of the Rev/RRE/XPO1/RAN complex, so that Rev can return to the nucleus for a subsequent round of export. Beside KPNB1, also seems to interact with TNPO1/Transportin-1, RANBP5/IPO5 and IPO7/RANBP7 for nuclear import. The nucleoporin-like HRB/RIP is an essential cofactor that probably indirectly interacts with Rev to release HIV RNAs from the perinuclear region to the cytoplasm. The protein is Protein Rev of Human immunodeficiency virus type 1 group M subtype H (isolate 90CF056) (HIV-1).